Consider the following 369-residue polypeptide: Anhydro-N-acetylmuramic acid kinase (369 aa).

Residue 12-19 (GTSLDGVD) participates in ATP binding.

Belongs to the anhydro-N-acetylmuramic acid kinase family.

It carries out the reaction 1,6-anhydro-N-acetyl-beta-muramate + ATP + H2O = N-acetyl-D-muramate 6-phosphate + ADP + H(+). It functions in the pathway amino-sugar metabolism; 1,6-anhydro-N-acetylmuramate degradation. The protein operates within cell wall biogenesis; peptidoglycan recycling. Functionally, catalyzes the specific phosphorylation of 1,6-anhydro-N-acetylmuramic acid (anhMurNAc) with the simultaneous cleavage of the 1,6-anhydro ring, generating MurNAc-6-P. Is required for the utilization of anhMurNAc either imported from the medium or derived from its own cell wall murein, and thus plays a role in cell wall recycling. The chain is Anhydro-N-acetylmuramic acid kinase from Escherichia coli O157:H7.